The primary structure comprises 354 residues: Replication factor C subunit 5 (354 aa).

Residues Val5, Ser17, 43 to 51 (GPNGTGKKT), and Arg231 contribute to the ATP site.

Belongs to the activator 1 small subunits family. As to quaternary structure, replication factor C (RFC) is a heteropentamer of subunits RFC1, RFC2, RFC3, RFC4 and RFC5 and forms a complex with POL30/PCNA in the presence of ATP. Component of the RAD24-RFC complex which consists of RAD24, RFC2, RFC3, RFC4 and RFC5 and associates with the checkpoint clamp DDC1:MEC3:RAD17 complex. Component of the ELG1-RFC complex which consists of ELG1, RFC2, RFC3, RFC4 and RFC5. Component of the CTF18-RFC complex, which consists of CTF18, CTF8, DCC1, RFC2, RFC3, RFC4 and RFC5. RFC5 interacts with ECO1.

It localises to the nucleus. In terms of biological role, component of ATP-dependent clamp loader (RFC and RFC-like) complexes for DNA clamps, such as the POL30/PCNA homotrimer and the checkpoint clamp DDC1:MEC3:RAD17 complex. During a clamp loading circle, the RFC:clamp complex binds to DNA and the recognition of the double-stranded/single-stranded junction stimulates ATP hydrolysis by RFC. The complex presumably provides bipartite ATP sites in which one subunit supplies a catalytic site for hydrolysis of ATP bound to the neighboring subunit. Dissociation of RFC from the clamp leaves the clamp encircling DNA. Component of the replication factor C (RFC or activator 1) complex which loads POL30/PCNA and acts during elongation of primed DNA templates by DNA polymerase delta and epsilon. RFC has an essential but redundant activity in sister chromatid cohesion establishment. Component of the RFC-like complex CTF18-RFC which is required for efficient establishment of chromosome cohesion during S-phase and may load or unload POL30/PCNA. Component of the RFC-like RAD24-RFC complex which loads the checkpoint clamp DDC1:MEC3:RAD17 complex and is involved in DNA repair pathways. Component of the RFC-like ELG1-RFC complex which appears to have a role in DNA replication, replication fork re-start, recombination and repair. This chain is Replication factor C subunit 5 (RFC5), found in Saccharomyces cerevisiae (strain ATCC 204508 / S288c) (Baker's yeast).